Consider the following 68-residue polypeptide: Phylloseptin-SP1 (68 aa).

A signal peptide spans methionine 1–cysteine 22. The propeptide occupies glutamate 23–arginine 45. A Leucine amide modification is found at leucine 67.

Expressed by the skin glands.

Its subcellular location is the secreted. In terms of biological role, weak cationic amphipathic alpha-helical antimicrobial peptide with weak activity against Gram-positive and Gram-negative bacteria and fungi. Has been tested against E.coli (MIC&gt;217.69 uM), S.aureus (MIC&gt;217.69 uM), K.pneumoniae (MIC&gt;189.00 uM) and C.albicans (MIC&gt;217.69 uM). Shows a moderate hemolytic activity. The protein is Phylloseptin-SP1 of Agalychnis spurrelli (Gliding leaf frog).